The sequence spans 145 residues: Transcription antitermination protein NusB (145 aa).

It belongs to the NusB family.

Functionally, involved in transcription antitermination. Required for transcription of ribosomal RNA (rRNA) genes. Binds specifically to the boxA antiterminator sequence of the ribosomal RNA (rrn) operons. In Geotalea uraniireducens (strain Rf4) (Geobacter uraniireducens), this protein is Transcription antitermination protein NusB.